Here is a 120-residue protein sequence, read N- to C-terminus: NAD(P)H-quinone oxidoreductase subunit 3, chloroplastic (120 aa).

A run of 3 helical transmembrane segments spans residues 9–29 (IFWT…WISG), 64–84 (MFAL…PWAM), and 88–108 (VLGV…VVGL).

This sequence belongs to the complex I subunit 3 family. In terms of assembly, NDH is composed of at least 16 different subunits, 5 of which are encoded in the nucleus.

The protein resides in the plastid. The protein localises to the chloroplast thylakoid membrane. It catalyses the reaction a plastoquinone + NADH + (n+1) H(+)(in) = a plastoquinol + NAD(+) + n H(+)(out). The enzyme catalyses a plastoquinone + NADPH + (n+1) H(+)(in) = a plastoquinol + NADP(+) + n H(+)(out). Its function is as follows. NDH shuttles electrons from NAD(P)H:plastoquinone, via FMN and iron-sulfur (Fe-S) centers, to quinones in the photosynthetic chain and possibly in a chloroplast respiratory chain. The immediate electron acceptor for the enzyme in this species is believed to be plastoquinone. Couples the redox reaction to proton translocation, and thus conserves the redox energy in a proton gradient. This chain is NAD(P)H-quinone oxidoreductase subunit 3, chloroplastic, found in Lolium perenne (Perennial ryegrass).